The chain runs to 2216 residues: Protein Ycf2 (2216 aa).

An ATP-binding site is contributed by 1567–1574 (GSIGTGRS).

Belongs to the Ycf2 family.

Its subcellular location is the plastid stroma. In terms of biological role, probable ATPase of unknown function. Its presence in a non-photosynthetic plant (Epifagus virginiana) and experiments in tobacco indicate that it has an essential function which is probably not related to photosynthesis. The sequence is that of Protein Ycf2 from Epifagus virginiana (Beechdrops).